A 392-amino-acid polypeptide reads, in one-letter code: Bone morphogenetic protein 15 (392 aa).

An N-terminal signal peptide occupies residues 1-18; sequence MVLLSILRILFLCELVLF. A propeptide spanning residues 19–267 is cleaved from the precursor; it reads MEHRAQMAEG…ERESLLRRTR (249 aa). N-linked (GlcNAc...) asparagine glycosylation is found at asparagine 87, asparagine 147, and asparagine 237. The residue at position 268 (glutamine 268) is a Pyrrolidone carboxylic acid; in P16 and P17. A Phosphoserine; in P16 modification is found at serine 273. A glycan (O-linked (HexNAc...) threonine; in P17) is linked at threonine 277. Disulfide bonds link cysteine 291–cysteine 357, cysteine 320–cysteine 389, and cysteine 324–cysteine 391. N-linked (GlcNAc...) asparagine glycosylation is present at asparagine 373.

The protein belongs to the TGF-beta family. As to quaternary structure, homodimer. But, in contrast to other members of this family, cannot be disulfide-linked.

It is found in the secreted. Its function is as follows. May be involved in follicular development. Oocyte-specific growth/differentiation factor that stimulates folliculogenesis and granulosa cell (GC) growth. The protein is Bone morphogenetic protein 15 (BMP15) of Homo sapiens (Human).